The chain runs to 89 residues: Probable monothiol glutaredoxin GrlA (89 aa).

In terms of domain architecture, Glutaredoxin spans 1 to 89 (MLYMKGTPKM…EPMLRDAVAA (89 aa)). A glutathione-binding site is contributed by lysine 5. A [2Fe-2S] cluster-binding site is contributed by cysteine 13. Glutathione contacts are provided by residues arginine 42, phenylalanine 54, and 67–68 (SD).

This sequence belongs to the glutaredoxin family. Monothiol subfamily.

The chain is Probable monothiol glutaredoxin GrlA (grlA) from Legionella pneumophila subsp. pneumophila (strain Philadelphia 1 / ATCC 33152 / DSM 7513).